Reading from the N-terminus, the 401-residue chain is Elongation factor Tu 1 (401 aa).

Residues K10–V209 form the tr-type G domain. Positions G19–T26 are G1. Residue G19–T26 participates in GTP binding. T26 contributes to the Mg(2+) binding site. The tract at residues G60–A64 is G2. Residues D81–G84 are G3. GTP contacts are provided by residues D81–H85 and N136–D139. The tract at residues N136–D139 is G4. The G5 stretch occupies residues S174–L176.

Belongs to the TRAFAC class translation factor GTPase superfamily. Classic translation factor GTPase family. EF-Tu/EF-1A subfamily. As to quaternary structure, monomer.

The protein localises to the cytoplasm. It carries out the reaction GTP + H2O = GDP + phosphate + H(+). GTP hydrolase that promotes the GTP-dependent binding of aminoacyl-tRNA to the A-site of ribosomes during protein biosynthesis. This Roseiflexus castenholzii (strain DSM 13941 / HLO8) protein is Elongation factor Tu 1.